We begin with the raw amino-acid sequence, 172 residues long: Adenine phosphoribosyltransferase (172 aa).

It belongs to the purine/pyrimidine phosphoribosyltransferase family. Homodimer.

The protein resides in the cytoplasm. The enzyme catalyses AMP + diphosphate = 5-phospho-alpha-D-ribose 1-diphosphate + adenine. The protein operates within purine metabolism; AMP biosynthesis via salvage pathway; AMP from adenine: step 1/1. Its function is as follows. Catalyzes a salvage reaction resulting in the formation of AMP, that is energically less costly than de novo synthesis. The chain is Adenine phosphoribosyltransferase from Clostridium botulinum (strain Eklund 17B / Type B).